The chain runs to 252 residues: 5-oxoprolinase subunit A (252 aa).

The protein belongs to the LamB/PxpA family. In terms of assembly, forms a complex composed of PxpA, PxpB and PxpC.

The catalysed reaction is 5-oxo-L-proline + ATP + 2 H2O = L-glutamate + ADP + phosphate + H(+). Its function is as follows. Catalyzes the cleavage of 5-oxoproline to form L-glutamate coupled to the hydrolysis of ATP to ADP and inorganic phosphate. This is 5-oxoprolinase subunit A from Mycobacterium marinum (strain ATCC BAA-535 / M).